Reading from the N-terminus, the 723-residue chain is Polyribonucleotide nucleotidyltransferase (723 aa).

Residues Asp-488 and Asp-494 each contribute to the Mg(2+) site. One can recognise a KH domain in the interval 555 to 614 (PKIITLNIKPEKIKDVIGPGGKQINAIIDETGVKIDIEQDGTVYIASQDQAMNRKAIAII). Positions 624–692 (GEVYTGKVRR…QQGRVNLSRK (69 aa)) constitute an S1 motif domain. A disordered region spans residues 692 to 723 (KALLEKKEQPEGDKKPQAEKKFYPKTKKPESK). Basic and acidic residues predominate over residues 693 to 723 (ALLEKKEQPEGDKKPQAEKKFYPKTKKPESK).

Belongs to the polyribonucleotide nucleotidyltransferase family. It depends on Mg(2+) as a cofactor.

Its subcellular location is the cytoplasm. It carries out the reaction RNA(n+1) + phosphate = RNA(n) + a ribonucleoside 5'-diphosphate. In terms of biological role, involved in mRNA degradation. Catalyzes the phosphorolysis of single-stranded polyribonucleotides processively in the 3'- to 5'-direction. The chain is Polyribonucleotide nucleotidyltransferase from Listeria monocytogenes serovar 1/2a (strain ATCC BAA-679 / EGD-e).